Reading from the N-terminus, the 349-residue chain is 11-beta-hydroxysteroid dehydrogenase 1A (349 aa).

The helical; Signal-anchor for type II membrane protein transmembrane segment at 10-30 (LTAPFFTFFGLCFFLPPFYFF) threads the bilayer. NADP(+)-binding positions include 54-80 (GASS…TARR) and D105. S184 is a binding site for substrate. Y197 functions as the Proton acceptor in the catalytic mechanism. Residues 197 to 201 (YNASK) and K201 each bind NADP(+).

Belongs to the short-chain dehydrogenases/reductases (SDR) family. Expressed in the above-ground part of seedlings, especially in the vascular tissues. Also detected in the buds and silique pedicels. Highly induced in oil-accumulating tissues of maturing seeds.

It localises to the lipid droplet. It is found in the membrane. It carries out the reaction an 11beta-hydroxysteroid + NADP(+) = an 11-oxosteroid + NADPH + H(+). It catalyses the reaction 17beta-estradiol + NADP(+) = estrone + NADPH + H(+). The catalysed reaction is corticosterone + NADP(+) = 11-dehydrocorticosterone + NADPH + H(+). The enzyme catalyses cortisone + NADPH + H(+) = cortisol + NADP(+). Functionally, catalyzes 11-beta, 17-beta-hydroxysteroid and reduces 17-beta-ketosteroids. Involved in regulating plant growth and development, probably promoting or mediating brassinosteroid effects. Plays a role during seed maturation. This Arabidopsis thaliana (Mouse-ear cress) protein is 11-beta-hydroxysteroid dehydrogenase 1A (HSD1).